Here is a 145-residue protein sequence, read N- to C-terminus: Acidic phospholipase A2 homolog textilotoxin C chain (145 aa).

Positions 1-19 are cleaved as a signal peptide; it reads MHPAHLLVLLGVYVSLLGA. Positions 20–27 are excised as a propeptide; that stretch reads ARIPPLPL. 7 disulfides stabilise this stretch: Cys-38–Cys-98, Cys-54–Cys-144, Cys-56–Cys-72, Cys-71–Cys-125, Cys-78–Cys-118, Cys-87–Cys-111, and Cys-105–Cys-116.

It belongs to the phospholipase A2 family. Group I subfamily. D49 sub-subfamily. Heterohexamer. 2 forms exist: 2 A or 2 B chains, 2 C chains and 2 covalently-linked D chains, and 1 A or 1 B, 1 C, 2 covalently-linked D chains and 2 differentially glycosylated covalently-linked D chains. Textilotoxin was originally described as pentameric. As to expression, expressed by the venom gland.

The protein resides in the secreted. In terms of biological role, snake venom oligomeric phospholipase A2 that has potent presynaptic neurotoxicity. Chain C is not itself neurotoxic, but it is essential for the neurotoxicity of textilotoxin. Chain C possesses a very low phospholipase activity. In Pseudonaja textilis (Eastern brown snake), this protein is Acidic phospholipase A2 homolog textilotoxin C chain.